A 127-amino-acid chain; its full sequence is Glycine cleavage system H protein (127 aa).

Residues 22–104 (EAVIGITHFA…YTEGWMLRVK (83 aa)) enclose the Lipoyl-binding domain. Lysine 63 bears the N6-lipoyllysine mark.

The protein belongs to the GcvH family. In terms of assembly, the glycine cleavage system is composed of four proteins: P, T, L and H. (R)-lipoate is required as a cofactor.

Its function is as follows. The glycine cleavage system catalyzes the degradation of glycine. The H protein shuttles the methylamine group of glycine from the P protein to the T protein. The protein is Glycine cleavage system H protein of Nitratidesulfovibrio vulgaris (strain DP4) (Desulfovibrio vulgaris).